Consider the following 370-residue polypeptide: Phosphoserine aminotransferase (370 aa).

M1 is modified (N-acetylmethionine). O-phospho-L-serine contacts are provided by H44 and R45. K51 is modified (N6-acetyllysine). Residues G79, C80, and W107 each contribute to the pyridoxal 5'-phosphate site. K127 carries the N6-acetyllysine modification. 3 residues coordinate pyridoxal 5'-phosphate: T156, D176, and Q199. K200 carries the post-translational modification N6-(pyridoxal phosphate)lysine. The pyridoxal 5'-phosphate site is built by N241 and T242. Residues K269, K318, and K323 each carry the N6-acetyllysine modification. Phosphoserine is present on S331. K333 carries the post-translational modification N6-acetyllysine. Positions 335, 336, and 342 each coordinate O-phospho-L-serine.

This sequence belongs to the class-V pyridoxal-phosphate-dependent aminotransferase family. SerC subfamily. As to quaternary structure, homodimer. The cofactor is pyridoxal 5'-phosphate. Expressed at high levels in the brain, liver, kidney and pancreas, and very weakly expressed in the thymus, prostate, testis and colon.

The catalysed reaction is O-phospho-L-serine + 2-oxoglutarate = 3-phosphooxypyruvate + L-glutamate. Its pathway is amino-acid biosynthesis; L-serine biosynthesis; L-serine from 3-phospho-D-glycerate: step 2/3. Its activity is regulated as follows. Phosphoserine transaminase activity is strongly stimulated by increasing the ionic strength. Its function is as follows. Involved in L-serine biosynthesis via the phosphorylated pathway, a three-step pathway converting the glycolytic intermediate 3-phospho-D-glycerate into L-serine. Catalyzes the second step, that is the pyridoxal 5'-phosphate-dependent transamination of 3-phosphohydroxypyruvate and L-glutamate to O-phosphoserine (OPS) and alpha-ketoglutarate. This Homo sapiens (Human) protein is Phosphoserine aminotransferase.